A 63-amino-acid chain; its full sequence is MKASELTQKSVEELNAELLGLLREQFNLRMQHATGQLTQTHQLKIVRRNIARVKTIITSKAGA.

The protein belongs to the universal ribosomal protein uL29 family.

The chain is Large ribosomal subunit protein uL29 from Shewanella loihica (strain ATCC BAA-1088 / PV-4).